The primary structure comprises 293 residues: tRNA pseudouridine synthase B (293 aa).

Residue Asp39 is the Nucleophile of the active site.

This sequence belongs to the pseudouridine synthase TruB family. Type 1 subfamily.

The enzyme catalyses uridine(55) in tRNA = pseudouridine(55) in tRNA. Its function is as follows. Responsible for synthesis of pseudouridine from uracil-55 in the psi GC loop of transfer RNAs. This is tRNA pseudouridine synthase B from Rickettsia bellii (strain RML369-C).